We begin with the raw amino-acid sequence, 159 residues long: MWKTTDLCDEFENELQICRQPFRSFGKKEQFHGKIATVKVKDDNVLVKEGLQTLPEGTVLVVDGGASTNCALLGDNLAAIAEERKLAGIIVNGYVRDSSELKNINIGILALGTMPNRSVKEGKGERNISLQFGQVEWKPDEYVYVDEDGVIISDKSLHR.

Substrate is bound by residues 74–77 and Arg96; that span reads GDNL. Position 97 (Asp97) interacts with a divalent metal cation.

The protein belongs to the class II aldolase/RraA-like family. In terms of assembly, homotrimer. Requires a divalent metal cation as cofactor.

The enzyme catalyses 4-hydroxy-4-methyl-2-oxoglutarate = 2 pyruvate. It catalyses the reaction oxaloacetate + H(+) = pyruvate + CO2. Its function is as follows. Catalyzes the aldol cleavage of 4-hydroxy-4-methyl-2-oxoglutarate (HMG) into 2 molecules of pyruvate. Also contains a secondary oxaloacetate (OAA) decarboxylase activity due to the common pyruvate enolate transition state formed following C-C bond cleavage in the retro-aldol and decarboxylation reactions. The sequence is that of Putative 4-hydroxy-4-methyl-2-oxoglutarate aldolase from Bacillus anthracis.